The sequence spans 236 residues: MGQKVNPIGLRLGINRNWSSRWFSVSQTTPSNILEDHKIRKFLKREMYYAGVSEFIIERAANKIRVTVVASRPGLIIGKKGVDIDKHKEALKKILHKEVFINIKEAKRPQANAQLAAENIATQLEKRVAFRRAMKKVMQAAMKAGAKGIKVKVSGRLAGAEMARTEWYMEGRVPLHTLRAKIDYGFAEAMTTYGIIGVKVWIFKGEVLHKGILPEKKEESKSGDKEVRSKSRRGRQ.

One can recognise a KH type-2 domain in the interval 39–107; it reads IRKFLKREMY…EVFINIKEAK (69 aa). The segment covering 214–229 has biased composition (basic and acidic residues); the sequence is PEKKEESKSGDKEVRS. Positions 214-236 are disordered; sequence PEKKEESKSGDKEVRSKSRRGRQ.

Belongs to the universal ribosomal protein uS3 family. As to quaternary structure, part of the 30S ribosomal subunit. Forms a tight complex with proteins S10 and S14.

In terms of biological role, binds the lower part of the 30S subunit head. Binds mRNA in the 70S ribosome, positioning it for translation. The polypeptide is Small ribosomal subunit protein uS3 (Helicobacter hepaticus (strain ATCC 51449 / 3B1)).